The chain runs to 322 residues: Putative UDP-N-acetylglucosamine--dolichyl-phosphate N-acetylglucosaminephosphotransferase (322 aa).

Transmembrane regions (helical) follow at residues 5–25 (AILL…VWVI), 46–66 (IPLL…FSLL), 76–96 (IPAV…DDIF), 102–122 (VRAF…VGHS), 123–143 (IISI…IIII), 160–180 (LNGL…YIGL), 186–206 (TYQA…FLIF), 222–242 (FIGA…ALAI), and 295–315 (YQVV…AVIL).

Belongs to the glycosyltransferase 4 family.

It localises to the cell membrane. It carries out the reaction a di-trans,poly-cis-dolichyl phosphate + UDP-N-acetyl-alpha-D-glucosamine = an N-acetyl-alpha-D-glucosaminyl-diphospho-di-trans,poly-cis-dolichol + UMP. Its activity is regulated as follows. Inhibited by tunicamycin. The polypeptide is Putative UDP-N-acetylglucosamine--dolichyl-phosphate N-acetylglucosaminephosphotransferase (gnpTA) (Saccharolobus solfataricus (strain ATCC 35092 / DSM 1617 / JCM 11322 / P2) (Sulfolobus solfataricus)).